Here is a 210-residue protein sequence, read N- to C-terminus: Uridine kinase (210 aa).

12 to 19 provides a ligand contact to ATP; sequence GGSGSGKT.

This sequence belongs to the uridine kinase family.

It localises to the cytoplasm. It catalyses the reaction uridine + ATP = UMP + ADP + H(+). The catalysed reaction is cytidine + ATP = CMP + ADP + H(+). It functions in the pathway pyrimidine metabolism; CTP biosynthesis via salvage pathway; CTP from cytidine: step 1/3. Its pathway is pyrimidine metabolism; UMP biosynthesis via salvage pathway; UMP from uridine: step 1/1. In Leuconostoc citreum (strain KM20), this protein is Uridine kinase.